Here is a 177-residue protein sequence, read N- to C-terminus: Large ribosomal subunit protein uL6 (177 aa).

Belongs to the universal ribosomal protein uL6 family. As to quaternary structure, part of the 50S ribosomal subunit.

Its function is as follows. This protein binds to the 23S rRNA, and is important in its secondary structure. It is located near the subunit interface in the base of the L7/L12 stalk, and near the tRNA binding site of the peptidyltransferase center. This chain is Large ribosomal subunit protein uL6, found in Acinetobacter baumannii (strain SDF).